A 92-amino-acid polypeptide reads, in one-letter code: Small ribosomal subunit protein uS19 (92 aa).

This sequence belongs to the universal ribosomal protein uS19 family.

In terms of biological role, protein S19 forms a complex with S13 that binds strongly to the 16S ribosomal RNA. The chain is Small ribosomal subunit protein uS19 from Mycoplasmopsis agalactiae (strain NCTC 10123 / CIP 59.7 / PG2) (Mycoplasma agalactiae).